Here is a 173-residue protein sequence, read N- to C-terminus: Small ribosomal subunit protein uS5 (173 aa).

Residues 17 to 80 (LREKMIAVNR…EESRRNMIKV (64 aa)) form the S5 DRBM domain.

This sequence belongs to the universal ribosomal protein uS5 family. Part of the 30S ribosomal subunit. Contacts proteins S4 and S8.

Its function is as follows. With S4 and S12 plays an important role in translational accuracy. Located at the back of the 30S subunit body where it stabilizes the conformation of the head with respect to the body. The protein is Small ribosomal subunit protein uS5 of Delftia acidovorans (strain DSM 14801 / SPH-1).